Consider the following 333-residue polypeptide: Glyceraldehyde-3-phosphate dehydrogenase (333 aa).

NAD(+)-binding positions include 11 to 12, D35, M79, and S121; that span reads RI. D-glyceraldehyde 3-phosphate contacts are provided by residues 150-152, T181, 210-211, and R233; these read SCT and TG. C151 acts as the Nucleophile in catalysis. Position 315 (N315) interacts with NAD(+).

Belongs to the glyceraldehyde-3-phosphate dehydrogenase family. In terms of assembly, homotetramer.

Its subcellular location is the cytoplasm. It carries out the reaction D-glyceraldehyde 3-phosphate + phosphate + NAD(+) = (2R)-3-phospho-glyceroyl phosphate + NADH + H(+). The protein operates within carbohydrate degradation; glycolysis; pyruvate from D-glyceraldehyde 3-phosphate: step 1/5. Its function is as follows. Catalyzes the oxidative phosphorylation of glyceraldehyde 3-phosphate (G3P) to 1,3-bisphosphoglycerate (BPG) using the cofactor NAD. The first reaction step involves the formation of a hemiacetal intermediate between G3P and a cysteine residue, and this hemiacetal intermediate is then oxidized to a thioester, with concomitant reduction of NAD to NADH. The reduced NADH is then exchanged with the second NAD, and the thioester is attacked by a nucleophilic inorganic phosphate to produce BPG. The chain is Glyceraldehyde-3-phosphate dehydrogenase (gap) from Bacteroides fragilis (strain YCH46).